The sequence spans 484 residues: MGEASSSSGHPRQNPHVLGYGFHGAMPNSLPSANLFEQQGGANYFGELEEALMQQVATLRRTQQTATTTSTLHHGDTTPFSTTATAAATARPPPTLDIFPSWPMRSLHTPKEGSNVTADTTDSESSSKNNSNQNASSDQHVLVGDMAGQFDQIPQQEQHKKMATNSPTHSSKTGKALDPKTMRRLAQNREAARKSRLRKKAYIQQLESSKLKLAQMEQDIHRARSQGLLLGAPGGNTSSGAAMFDVDYARWLEEDSQRMAELHGGLHAHLPDSDLRAIVDDTLTHYDHLFNLKGMAAKADVFHLITGMWATPAERCFLWMGGFRPSELLKTLTPQLDPLTEQQVVGICNLQQSSQQAEEALSQGLDQLHQSLAETVAGGSPLDDPNVGSFMGHMAIALGQLSNLEGFVIQADNLRQQTIHQMHRILTVRQAARCFLAIGEYHNRLRALSSLWASRPREILVADEGNCGELSIAAHPSESQYSAF.

A compositionally biased stretch (polar residues) spans 1–11; it reads MGEASSSSGHP. Disordered regions lie at residues 1–22, 84–137, and 155–181; these read MGEA…GYGF, ATAA…NASS, and QQEQ…DPKT. Residues 123–137 are compositionally biased toward low complexity; the sequence is SESSSKNNSNQNASS. Over residues 163 to 173 the composition is skewed to polar residues; the sequence is ATNSPTHSSKT. Residues 178–222 form the bZIP domain; that stretch reads DPKTMRRLAQNREAARKSRLRKKAYIQQLESSKLKLAQMEQDIHR. A basic motif region spans residues 180-200; that stretch reads KTMRRLAQNREAARKSRLRKK. A leucine-zipper region spans residues 206–220; it reads LESSKLKLAQMEQDI. Positions 241-455 constitute a DOG1 domain; sequence AAMFDVDYAR…RALSSLWASR (215 aa).

It belongs to the bZIP family. As to quaternary structure, interacts with NPR1/NH1 and NPR3/NH3.

It is found in the nucleus. In terms of biological role, transcriptional regulator involved in defense response. The protein is Transcription factor TGAL4 of Oryza sativa subsp. japonica (Rice).